Consider the following 543-residue polypeptide: MAKELIFGKDARTRLLQGINKIANAVKVTVGPKGQNVILERKFANPLITNDGVTIAKEIELSDPVENIGAKVISVAAVSTNDIAGDGTTTATILAQEMTNRGIEIINKGANPVNIRRGIEDASLLIIKELEKYSKKINTNEEIEQVAAISSGSKEIGKLIAQAMALVGKNGVITTDDAKTINTTLETTEGIEFKGTYASPYMVSDQEKMEVVLEQPKILVSSLKINTIKEILPLLEGSVENGNPLLIVAPDFAEEVVTTLAVNKLRGTINVVAVKCNEYGERQKAALEDLAISSGTLAYNNEINSGFKDVTVDNLGDARKVQIAKEKTTVIGGKGNKDKIKKHVELLNGRLKQTTDKYDSDLIKERIAYLSQGVAVIRVGGATELAQKELKLRIEDALNSTKAAVEEGIIAGGGVGLLNASCVLTNSKLKERYENETSVENIKEILLGFEIVQKSLEAPARQIIQNSGVDPVKILSELKNEKTGVGFDAETKKKVDMIANGIIDPTKVTKTALEKAASVASSLITTNVAVYDVKERKDNSFSE.

Residues 29–32, 86–90, glycine 413, and aspartate 504 contribute to the ATP site; these read TVGP and DGTTT.

Belongs to the chaperonin (HSP60) family. In terms of assembly, forms a cylinder of 14 subunits composed of two heptameric rings stacked back-to-back. Interacts with the co-chaperonin GroES.

It is found in the cytoplasm. The catalysed reaction is ATP + H2O + a folded polypeptide = ADP + phosphate + an unfolded polypeptide.. Together with its co-chaperonin GroES, plays an essential role in assisting protein folding. The GroEL-GroES system forms a nano-cage that allows encapsulation of the non-native substrate proteins and provides a physical environment optimized to promote and accelerate protein folding. This is Chaperonin GroEL from Mycoplasma genitalium (strain ATCC 33530 / DSM 19775 / NCTC 10195 / G37) (Mycoplasmoides genitalium).